We begin with the raw amino-acid sequence, 261 residues long: Carnitinyl-CoA dehydratase (261 aa).

Catalysis depends on Glu-111, which acts as the Nucleophile. Glu-131 functions as the Proton acceptor in the catalytic mechanism.

The protein belongs to the enoyl-CoA hydratase/isomerase family.

It catalyses the reaction (R)-carnitinyl-CoA = crotonobetainyl-CoA + H2O. The protein operates within amine and polyamine metabolism; carnitine metabolism. Its function is as follows. Catalyzes the reversible dehydration of L-carnitinyl-CoA to crotonobetainyl-CoA. The protein is Carnitinyl-CoA dehydratase of Shigella flexneri.